The chain runs to 340 residues: Phosphoribosylformylglycinamidine cyclo-ligase (340 aa).

This sequence belongs to the AIR synthase family.

It is found in the cytoplasm. The enzyme catalyses 2-formamido-N(1)-(5-O-phospho-beta-D-ribosyl)acetamidine + ATP = 5-amino-1-(5-phospho-beta-D-ribosyl)imidazole + ADP + phosphate + H(+). Its pathway is purine metabolism; IMP biosynthesis via de novo pathway; 5-amino-1-(5-phospho-D-ribosyl)imidazole from N(2)-formyl-N(1)-(5-phospho-D-ribosyl)glycinamide: step 2/2. This Streptococcus pyogenes serotype M28 (strain MGAS6180) protein is Phosphoribosylformylglycinamidine cyclo-ligase.